We begin with the raw amino-acid sequence, 123 residues long: Large ribosomal subunit protein bL12 (123 aa).

The protein belongs to the bacterial ribosomal protein bL12 family. Homodimer. Part of the ribosomal stalk of the 50S ribosomal subunit. Forms a multimeric L10(L12)X complex, where L10 forms an elongated spine to which 2 to 4 L12 dimers bind in a sequential fashion. Binds GTP-bound translation factors.

In terms of biological role, forms part of the ribosomal stalk which helps the ribosome interact with GTP-bound translation factors. Is thus essential for accurate translation. The polypeptide is Large ribosomal subunit protein bL12 (Pseudoalteromonas atlantica (strain T6c / ATCC BAA-1087)).